Reading from the N-terminus, the 137-residue chain is uncharacterized protein (137 aa).

Positions 5 to 136 (NRHLIHQINQ…FSHLFRMFLQ (132 aa)) constitute an HTH marR-type domain. The segment at residues 51–74 (QKEIWSYLNVEAPTVTRTIKRLEE) is a DNA-binding region (H-T-H motif).

This is an uncharacterized protein from Bacillus subtilis (strain 168).